Here is a 250-residue protein sequence, read N- to C-terminus: DNA repair protein RecO (250 aa).

The protein belongs to the RecO family.

Involved in DNA repair and RecF pathway recombination. This is DNA repair protein RecO from Granulibacter bethesdensis (strain ATCC BAA-1260 / CGDNIH1).